Here is a 92-residue protein sequence, read N- to C-terminus: Small ribosomal subunit protein uS19 (92 aa).

The protein belongs to the universal ribosomal protein uS19 family.

In terms of biological role, protein S19 forms a complex with S13 that binds strongly to the 16S ribosomal RNA. The chain is Small ribosomal subunit protein uS19 from Nitrobacter winogradskyi (strain ATCC 25391 / DSM 10237 / CIP 104748 / NCIMB 11846 / Nb-255).